The primary structure comprises 336 residues: Aspartate--ammonia ligase (336 aa).

This sequence belongs to the class-II aminoacyl-tRNA synthetase family. AsnA subfamily.

It is found in the cytoplasm. It carries out the reaction L-aspartate + NH4(+) + ATP = L-asparagine + AMP + diphosphate + H(+). It functions in the pathway amino-acid biosynthesis; L-asparagine biosynthesis; L-asparagine from L-aspartate (ammonia route): step 1/1. The protein is Aspartate--ammonia ligase of Clostridium perfringens (strain 13 / Type A).